The chain runs to 192 residues: CASP-like protein 1E1 (192 aa).

Positions 1 to 22 (MDSQNKNSVDAMDGIESRGMKE) are disordered. The Cytoplasmic segment spans residues 1–29 (MDSQNKNSVDAMDGIESRGMKERGGRTNS). The helical transmembrane segment at 30-50 (FLVLRVLAFVLTSTAAIVHGV) threads the bilayer. Residues 51–81 (NNQTETVPIQLTSSMPPLYVPVVAKWHYLSA) lie on the Extracellular side of the membrane. An N-linked (GlcNAc...) asparagine glycan is attached at Asn-52. Residues 82–102 (FVFFVVSNAIACSYAAISVML) traverse the membrane as a helical segment. Residues 103-118 (SFCGKKSMVPIILTLD) are Cytoplasmic-facing. Residues 119–139 (LLMVALLFSSNGAATAIGVMG) traverse the membrane as a helical segment. Over 140-161 (YKGNSHVKWNKVCNVFGKFCNQ) the chain is Extracellular. Residues 162–182 (VAASVVLSLIGSIVFVLLVML) form a helical membrane-spanning segment. Topologically, residues 183–192 (TAFRLHNKSK) are cytoplasmic.

This sequence belongs to the Casparian strip membrane proteins (CASP) family. In terms of assembly, homodimer and heterodimers.

The protein resides in the cell membrane. This is CASP-like protein 1E1 from Ricinus communis (Castor bean).